A 563-amino-acid chain; its full sequence is MGELGPASAQHGSDSISFSGSYTQPLGAPQPPNEPHAISVSLPTWEAVTAVMAGADWAICQLQTSYPRFDIHKCVRELHDAVLARFKHPAHTVCRAFPSPEAAERFVSRLQREDPILSVHTARFHLPHDAVPELAKWAAFSVVLFNESLEEVAFEFWEWFGDGISSRHAEFCLTQFSFLNTGSDQPEYQTVGQDSHDLSAMNLPEWIDSSTKDKMDIKSRLASSATSADPALKPMGNDDVLLYATGMAAISAIARALARTSDDSGAVVYGWPYSGTPHCVQGCGFKRYTMYGHGSKADLDSLETLLVSETRFTVLFCEITSNPQLSTPDLHRIRDLADRFGFIVVCDDTLGTSVNVDILPYVDVIITSLTKIFSGAGNVMGGSLMINPNSGHYSTLRALLTTTYEDLYFPLDAKTIARNSSDFAARVHKCNKSALQIANLLNSHASVESVNYPTMVPTAPLYERYRRPDGGYGFLLSVIFREPESAVLFYDKLDVWKGPTVGTNFSISIPYSALAHAKEQDWAASHGVPKHIVRLSVGLEDYGDLSERVNRALREVELREKMG.

The segment at 1-37 (MGELGPASAQHGSDSISFSGSYTQPLGAPQPPNEPHA) is disordered. Residues 10–24 (QHGSDSISFSGSYTQ) show a composition bias toward polar residues.

Belongs to the trans-sulfuration enzymes family. MET7 subfamily. Pyridoxal 5'-phosphate serves as cofactor.

The catalysed reaction is cyclo(L-arginyl-(Z)-dehydro-3,4-dihydroxytyrosyl) + O-acetyl-L-homoserine = cyclo(L-arginyl-(Z)-dehydro-4-O-homoseryl-tyrosyl) + acetate + H(+). The protein operates within secondary metabolite biosynthesis. Its function is as follows. Cystathionine gamma-synthase-like protein; part of the ank cluster that mediates the biosynthesis of NK13650 C, a highly modified cyclo-arginine-tyrosine dipeptide. AnkD catalyzes the attachment of L-homoserine moiety using O-acetyl-L-homoserine as co-substrate. Within the pathway, the cyclodipeptide synthase ankA acts as the scaffold-generating enzyme and is responsible for formation of the cyclo-Arg-Tyr diketopiperazine (cRY) from L-Arg and L-Tyr. The ankA product cRY is desaturated by the cytochrome P450 monooxygenase ankB to yield a dehydro-cyclodipeptide intermediate. The FAD-dependent monooxygenase ankC then installs the m-OH, ankD catalyzes the attachment of L-homoserine, and ankE ligates citrate to the ankD product to yield NK13650 B. The O-methyltransferase ankF is responsible for methylation of the C-17 phenol group of NK13650 B to produce NK13650 D. Amidation of NK13650 D with L-Asp by ankG then leads to the production of NK13650 C, whereas amidation of NK13650 B produces NK13650 A. The protein is Cystathionine gamma-synthase-like protein ankD of Aspergillus thermomutatus (Neosartorya pseudofischeri).